The primary structure comprises 932 residues: Probable serine/threonine-protein kinase clkA (932 aa).

Residues Met1 to Thr10 show a composition bias toward basic residues. Disordered regions lie at residues Met1–Tyr21, Tyr39–Thr198, and Asn212–Asn562. 2 stretches are compositionally biased toward low complexity: residues Tyr11–Tyr21 and Tyr39–Tyr123. Positions Phe124 to Leu143 are enriched in polar residues. Low complexity-rich tracts occupy residues Asp148 to Gly196, Asn218 to Asn305, Val314 to Tyr342, and Asn351 to Asn562. The Protein kinase domain occupies Tyr590–Leu920. ATP is bound by residues Val596–Val604 and Lys619. Asp719 functions as the Proton acceptor in the catalytic mechanism.

The protein belongs to the protein kinase superfamily. CMGC Ser/Thr protein kinase family.

It carries out the reaction L-seryl-[protein] + ATP = O-phospho-L-seryl-[protein] + ADP + H(+). It catalyses the reaction L-threonyl-[protein] + ATP = O-phospho-L-threonyl-[protein] + ADP + H(+). This chain is Probable serine/threonine-protein kinase clkA (clkA), found in Dictyostelium discoideum (Social amoeba).